We begin with the raw amino-acid sequence, 1210 residues long: Disease resistance-like protein DSC2 (1210 aa).

A TIR domain is found at 59–223 (WTHQVFPSFR…KVAKDVSDVL (165 aa)). E134 is an active-site residue. In terms of domain architecture, NB-ARC spans 241–511 (ITRINSLLCL…CLFNGCQVNH (271 aa)). LRR repeat units follow at residues 662–685 (AKFL…IQPL), 686–709 (KNLK…SNAT), 711–732 (LESL…IRGT), 756–780 (ATSL…LPGD), 783–804 (MRSL…PEIS), 805–828 (TNIQ…RLWS), 830–848 (LDKL…PPVP), 849–873 (DGIS…NLSQ), and 940–970 (LPEL…NLSQ).

This sequence belongs to the disease resistance NB-LRR family. Interacts with DSC1.

It carries out the reaction NAD(+) + H2O = ADP-D-ribose + nicotinamide + H(+). Functionally, TIR-NB-LRR receptor-like protein involved in plant defense. Acts as a trigger of hypersensitive response (HR). Functions as a guard of CAMTA3, a negative regulator of immunity, during pathogen infection. This chain is Disease resistance-like protein DSC2, found in Arabidopsis thaliana (Mouse-ear cress).